A 414-amino-acid polypeptide reads, in one-letter code: Isocitrate dehydrogenase [NADP] cytoplasmic (414 aa).

N-acetylserine is present on serine 2. Phosphotyrosine is present on tyrosine 42. 75–77 lines the NADP(+) pocket; that stretch reads TIT. Threonine 77 serves as a coordination point for substrate. Lysine 81 bears the N6-acetyllysine mark. Residue arginine 82 coordinates NADP(+). Substrate is bound by residues 94-100 and arginine 109; that span reads SPNGTIR. Lysine 126 is modified (N6-succinyllysine). Substrate is bound by residues arginine 132 and lysine 212. Residues lysine 224, lysine 233, and lysine 243 each carry the N6-acetyllysine modification. Aspartate 252 lines the Mn(2+) pocket. Residue lysine 260 coordinates NADP(+). Aspartate 275 and aspartate 279 together coordinate Mn(2+). Residue 310–315 participates in NADP(+) binding; that stretch reads GTVTRH. Lysine 321 carries the N6-acetyllysine modification. Position 328 (asparagine 328) interacts with NADP(+). Serine 389 carries the phosphoserine modification. An N6-succinyllysine modification is found at lysine 400.

This sequence belongs to the isocitrate and isopropylmalate dehydrogenases family. As to quaternary structure, homodimer. It depends on Mg(2+) as a cofactor. The cofactor is Mn(2+). Acetylation at Lys-374 dramatically reduces catalytic activity.

Its subcellular location is the cytoplasm. It localises to the cytosol. The enzyme catalyses D-threo-isocitrate + NADP(+) = 2-oxoglutarate + CO2 + NADPH. Its function is as follows. Catalyzes the NADP(+)-dependent oxidative decarboxylation of isocitrate (D-threo-isocitrate) to 2-ketoglutarate (2-oxoglutarate), which is required by other enzymes such as the phytanoyl-CoA dioxygenase. Plays a critical role in the generation of NADPH, an important cofactor in many biosynthesis pathways. May act as a corneal epithelial crystallin and may be involved in maintaining corneal epithelial transparency. This is Isocitrate dehydrogenase [NADP] cytoplasmic (IDH1) from Microtus mexicanus (Mexican vole).